The following is a 300-amino-acid chain: Cyclic nucleotide synthase CdnE01 (300 aa).

Mg(2+) contacts are provided by Asp-63, Asp-65, and Asp-137.

The protein belongs to the CD-NTase family. E01 subfamily. Mg(2+) is required as a cofactor.

Its activity is regulated as follows. Binds to and probably activated by a virus-derived, approximately 400 nucleotide RNA (called CBASS-activating bacteriophage RNA, cabRNA) that begins in the viral terminase subunit terS and extends into terL, as well as by a shorter RNA with part of the cabRNA sequence able to form a hairpin. RNA secondary and/or tertiary structure, as well as viral infection itself, are important for CdnE activation. In terms of biological role, cyclic nucleotide synthase (second messenger synthase) of a CBASS antivirus system. CBASS (cyclic oligonucleotide-based antiphage signaling system) provides immunity against bacteriophage. The CD-NTase protein synthesizes cyclic nucleotides in response to infection; these serve as specific second messenger signals. The signals activate a diverse range of effectors, leading to bacterial cell death and thus abortive phage infection. A type I-B CBASS system. Functionally, protects S.aureus against phage infection. When the CBASS operon (cdnE and the following gene) is introduced in S.aureus strain RN4220 there is strong protection against lytic DNA phages 80alpha-vir and phi-NM1-gamma-6 but little to no protection against phages phi-NM4-gamma-4 or phi-12-gamma-3. In Staphylococcus haemolyticus, this protein is Cyclic nucleotide synthase CdnE01.